The following is a 409-amino-acid chain: L-cysteine:1D-myo-inositol 2-amino-2-deoxy-alpha-D-glucopyranoside ligase (409 aa).

Residue C43 participates in Zn(2+) binding. Residues 43-46 (CGIT), T58, and 81-83 (NVT) contribute to the L-cysteinyl-5'-AMP site. The short motif at 45–55 (ITPYDATHMGH) is the 'HIGH' region element. The short motif at 183-188 (ERGGDP) is the 'ERGGDP' region element. W224 contacts L-cysteinyl-5'-AMP. C228 provides a ligand contact to Zn(2+). 246-248 (GSD) lines the L-cysteinyl-5'-AMP pocket. H253 contacts Zn(2+). L-cysteinyl-5'-AMP is bound at residue V280. A 'KMSKS' region motif is present at residues 286–290 (KMSKS).

This sequence belongs to the class-I aminoacyl-tRNA synthetase family. MshC subfamily. Monomer. Zn(2+) is required as a cofactor.

It catalyses the reaction 1D-myo-inositol 2-amino-2-deoxy-alpha-D-glucopyranoside + L-cysteine + ATP = 1D-myo-inositol 2-(L-cysteinylamino)-2-deoxy-alpha-D-glucopyranoside + AMP + diphosphate + H(+). Functionally, catalyzes the ATP-dependent condensation of GlcN-Ins and L-cysteine to form L-Cys-GlcN-Ins. The protein is L-cysteine:1D-myo-inositol 2-amino-2-deoxy-alpha-D-glucopyranoside ligase of Streptomyces griseus subsp. griseus (strain JCM 4626 / CBS 651.72 / NBRC 13350 / KCC S-0626 / ISP 5235).